The primary structure comprises 367 residues: Holliday junction branch migration complex subunit RuvB (367 aa).

The interval 2-196 (TDEPLTDRPP…FGFTARLDFY (195 aa)) is large ATPase domain (RuvB-L). Residues Leu35, Arg36, Gly77, Lys80, Thr81, Thr82, 143–145 (EDF), Arg186, Tyr196, and Arg233 each bind ATP. Mg(2+) is bound at residue Thr81. The segment at 197-267 (EPADLERIVH…VAQAALAVYE (71 aa)) is small ATPAse domain (RuvB-S). A head domain (RuvB-H) region spans residues 270-367 (EHGLDRLDRA…IDRDAGEPTA (98 aa)). DNA-binding residues include Arg325 and Arg330.

This sequence belongs to the RuvB family. Homohexamer. Forms an RuvA(8)-RuvB(12)-Holliday junction (HJ) complex. HJ DNA is sandwiched between 2 RuvA tetramers; dsDNA enters through RuvA and exits via RuvB. An RuvB hexamer assembles on each DNA strand where it exits the tetramer. Each RuvB hexamer is contacted by two RuvA subunits (via domain III) on 2 adjacent RuvB subunits; this complex drives branch migration. In the full resolvosome a probable DNA-RuvA(4)-RuvB(12)-RuvC(2) complex forms which resolves the HJ.

The protein resides in the cytoplasm. It catalyses the reaction ATP + H2O = ADP + phosphate + H(+). The RuvA-RuvB-RuvC complex processes Holliday junction (HJ) DNA during genetic recombination and DNA repair, while the RuvA-RuvB complex plays an important role in the rescue of blocked DNA replication forks via replication fork reversal (RFR). RuvA specifically binds to HJ cruciform DNA, conferring on it an open structure. The RuvB hexamer acts as an ATP-dependent pump, pulling dsDNA into and through the RuvAB complex. RuvB forms 2 homohexamers on either side of HJ DNA bound by 1 or 2 RuvA tetramers; 4 subunits per hexamer contact DNA at a time. Coordinated motions by a converter formed by DNA-disengaged RuvB subunits stimulates ATP hydrolysis and nucleotide exchange. Immobilization of the converter enables RuvB to convert the ATP-contained energy into a lever motion, pulling 2 nucleotides of DNA out of the RuvA tetramer per ATP hydrolyzed, thus driving DNA branch migration. The RuvB motors rotate together with the DNA substrate, which together with the progressing nucleotide cycle form the mechanistic basis for DNA recombination by continuous HJ branch migration. Branch migration allows RuvC to scan DNA until it finds its consensus sequence, where it cleaves and resolves cruciform DNA. This is Holliday junction branch migration complex subunit RuvB from Acidothermus cellulolyticus (strain ATCC 43068 / DSM 8971 / 11B).